Reading from the N-terminus, the 511-residue chain is Bifunctional purine biosynthesis protein PurH (511 aa).

Residues 1 to 147 (MIQIKRALIS…KNYKHTLVLT (147 aa)) form the MGS-like domain.

Belongs to the PurH family.

It carries out the reaction (6R)-10-formyltetrahydrofolate + 5-amino-1-(5-phospho-beta-D-ribosyl)imidazole-4-carboxamide = 5-formamido-1-(5-phospho-D-ribosyl)imidazole-4-carboxamide + (6S)-5,6,7,8-tetrahydrofolate. It catalyses the reaction IMP + H2O = 5-formamido-1-(5-phospho-D-ribosyl)imidazole-4-carboxamide. Its pathway is purine metabolism; IMP biosynthesis via de novo pathway; 5-formamido-1-(5-phospho-D-ribosyl)imidazole-4-carboxamide from 5-amino-1-(5-phospho-D-ribosyl)imidazole-4-carboxamide (10-formyl THF route): step 1/1. It functions in the pathway purine metabolism; IMP biosynthesis via de novo pathway; IMP from 5-formamido-1-(5-phospho-D-ribosyl)imidazole-4-carboxamide: step 1/1. The polypeptide is Bifunctional purine biosynthesis protein PurH (Leptospira borgpetersenii serovar Hardjo-bovis (strain JB197)).